Here is a 43-residue protein sequence, read N- to C-terminus: Neurotrophin-3 (43 aa).

Belongs to the NGF-beta family.

It localises to the secreted. Seems to promote the survival of visceral and proprioceptive sensory neurons. This Raja clavata (Thornback ray) protein is Neurotrophin-3 (ntf3).